A 192-amino-acid polypeptide reads, in one-letter code: MFDITDEAKVYVADLFAQQDEKDLGLKVDVEKAGTPAAVVTFNFCFPKELSKTYKKFEYEGFYAYIDELNFEYLKDSEVALKDAGTGKKLTITAPNTKGKEPKEDAPLEEKIKYVIAANINPGLASHGGFVELVEITKHMDVILNFGGGCQGCSSVKSTLEQGVEAQLKMSFPEIKSVRDVTDHSNTDNAYI.

[4Fe-4S] cluster contacts are provided by Cys150 and Cys153.

It belongs to the NfuA family. In terms of assembly, homodimer. Requires [4Fe-4S] cluster as cofactor.

In terms of biological role, involved in iron-sulfur cluster biogenesis. Binds a 4Fe-4S cluster, can transfer this cluster to apoproteins, and thereby intervenes in the maturation of Fe/S proteins. Could also act as a scaffold/chaperone for damaged Fe/S proteins. This is Fe/S biogenesis protein NfuA from Ruthia magnifica subsp. Calyptogena magnifica.